A 79-amino-acid polypeptide reads, in one-letter code: Small ribosomal subunit protein bS18c (79 aa).

The protein belongs to the bacterial ribosomal protein bS18 family. In terms of assembly, part of the 30S ribosomal subunit.

The protein resides in the plastid. Its subcellular location is the chloroplast. This Physcomitrium patens (Spreading-leaved earth moss) protein is Small ribosomal subunit protein bS18c.